The chain runs to 452 residues: Pup--protein ligase (452 aa).

Glutamate 9 is a Mg(2+) binding site. Arginine 53 lines the ATP pocket. Tyrosine 55 contacts Mg(2+). The active-site Proton acceptor is the aspartate 57. Mg(2+) is bound at residue glutamate 63. The ATP site is built by threonine 66 and tryptophan 419.

This sequence belongs to the Pup ligase/Pup deamidase family. Pup-conjugating enzyme subfamily.

The catalysed reaction is ATP + [prokaryotic ubiquitin-like protein]-L-glutamate + [protein]-L-lysine = ADP + phosphate + N(6)-([prokaryotic ubiquitin-like protein]-gamma-L-glutamyl)-[protein]-L-lysine.. It participates in protein degradation; proteasomal Pup-dependent pathway. Its pathway is protein modification; protein pupylation. In terms of biological role, catalyzes the covalent attachment of the prokaryotic ubiquitin-like protein modifier Pup to the proteasomal substrate proteins, thereby targeting them for proteasomal degradation. This tagging system is termed pupylation. The ligation reaction involves the side-chain carboxylate of the C-terminal glutamate of Pup and the side-chain amino group of a substrate lysine. The sequence is that of Pup--protein ligase from Rhodococcus jostii (strain RHA1).